Here is a 99-residue protein sequence, read N- to C-terminus: Protein S100-A11 (99 aa).

N-acetylmethionine is present on Met1. Position 8 is a phosphothreonine (Thr8). EF-hand domains lie at 10–47 and 53–88; these read RCIESLIAIFQKHAGRDGNNTKISKTEFLIFMNTELAA and KDPGVLDRMMKKLDLDSDGQLDFQEFLNLIGGLAIA. Asn29, Lys31, Glu36, Asp66, Asp68, Asp70, Gln72, and Glu77 together coordinate Ca(2+).

Belongs to the S-100 family. In terms of assembly, homodimer; disulfide-linked. Phosphorylation at Thr-8 significantly suppresses homodimerization and promotes association with NCL/nucleolin which induces nuclear translocation.

The protein localises to the cytoplasm. The protein resides in the nucleus. Its function is as follows. Facilitates the differentiation and the cornification of keratinocytes. This chain is Protein S100-A11 (S100A11), found in Sus scrofa (Pig).